Here is a 369-residue protein sequence, read N- to C-terminus: Endo-1,4-beta-xylanase A (369 aa).

A signal peptide spans 1-20 (MRKLTQFCLGLMLLPIAAVA). Residues 21 to 367 (QNQPTMKDVL…KPVVKEIIKL (347 aa)) form the GH10 domain. The Proton donor role is filled by Glu-156. The active-site Nucleophile is the Glu-261.

The protein belongs to the glycosyl hydrolase 10 (cellulase F) family.

It catalyses the reaction Endohydrolysis of (1-&gt;4)-beta-D-xylosidic linkages in xylans.. The protein operates within glycan degradation; xylan degradation. The chain is Endo-1,4-beta-xylanase A (xynA) from Xylanibacter ruminicola (Prevotella ruminicola).